A 170-amino-acid chain; its full sequence is ATP synthase subunit b (170 aa).

Residues 15–37 form a helical membrane-spanning segment; that stretch reads GDILFQLLAMLILLALLKKYALG.

It belongs to the ATPase B chain family. In terms of assembly, F-type ATPases have 2 components, F(1) - the catalytic core - and F(0) - the membrane proton channel. F(1) has five subunits: alpha(3), beta(3), gamma(1), delta(1), epsilon(1). F(0) has three main subunits: a(1), b(2) and c(10-14). The alpha and beta chains form an alternating ring which encloses part of the gamma chain. F(1) is attached to F(0) by a central stalk formed by the gamma and epsilon chains, while a peripheral stalk is formed by the delta and b chains. The F(1)F(0) complex interacts with SpoIIIJ and YqjG; YqgA is found in the same complex.

Its subcellular location is the cell membrane. In terms of biological role, f(1)F(0) ATP synthase produces ATP from ADP in the presence of a proton or sodium gradient. F-type ATPases consist of two structural domains, F(1) containing the extramembraneous catalytic core and F(0) containing the membrane proton channel, linked together by a central stalk and a peripheral stalk. During catalysis, ATP synthesis in the catalytic domain of F(1) is coupled via a rotary mechanism of the central stalk subunits to proton translocation. Component of the F(0) channel, it forms part of the peripheral stalk, linking F(1) to F(0). The chain is ATP synthase subunit b from Bacillus subtilis (strain 168).